A 264-amino-acid chain; its full sequence is Thymidylate synthase (264 aa).

Arg-21 is a dUMP binding site. Residue His-51 coordinates (6R)-5,10-methylene-5,6,7,8-tetrahydrofolate. DUMP is bound at residue 126 to 127; it reads RR. Cys-146 acts as the Nucleophile in catalysis. DUMP is bound by residues 166–169, Asn-177, and 207–209; these read RSCD and HLY. (6R)-5,10-methylene-5,6,7,8-tetrahydrofolate is bound at residue Asp-169. Ala-263 contacts (6R)-5,10-methylene-5,6,7,8-tetrahydrofolate.

This sequence belongs to the thymidylate synthase family. Bacterial-type ThyA subfamily. In terms of assembly, homodimer.

The protein resides in the cytoplasm. It catalyses the reaction dUMP + (6R)-5,10-methylene-5,6,7,8-tetrahydrofolate = 7,8-dihydrofolate + dTMP. It participates in pyrimidine metabolism; dTTP biosynthesis. Catalyzes the reductive methylation of 2'-deoxyuridine-5'-monophosphate (dUMP) to 2'-deoxythymidine-5'-monophosphate (dTMP) while utilizing 5,10-methylenetetrahydrofolate (mTHF) as the methyl donor and reductant in the reaction, yielding dihydrofolate (DHF) as a by-product. This enzymatic reaction provides an intracellular de novo source of dTMP, an essential precursor for DNA biosynthesis. The protein is Thymidylate synthase of Salmonella typhi.